The following is a 433-amino-acid chain: Glutamyl-tRNA reductase (433 aa).

Residues 49-52 (TCNR), serine 109, 114-116 (EGQ), and glutamine 120 contribute to the substrate site. The Nucleophile role is filled by cysteine 50. 198–203 (GAGRMS) contacts NADP(+).

It belongs to the glutamyl-tRNA reductase family. Homodimer.

It carries out the reaction (S)-4-amino-5-oxopentanoate + tRNA(Glu) + NADP(+) = L-glutamyl-tRNA(Glu) + NADPH + H(+). It functions in the pathway porphyrin-containing compound metabolism; protoporphyrin-IX biosynthesis; 5-aminolevulinate from L-glutamyl-tRNA(Glu): step 1/2. It participates in porphyrin-containing compound metabolism; chlorophyll biosynthesis. Functionally, catalyzes the NADPH-dependent reduction of glutamyl-tRNA(Glu) to glutamate 1-semialdehyde (GSA). This chain is Glutamyl-tRNA reductase, found in Prochlorococcus marinus subsp. pastoris (strain CCMP1986 / NIES-2087 / MED4).